We begin with the raw amino-acid sequence, 228 residues long: 3,4-dihydroxy-2-butanone 4-phosphate synthase (228 aa).

D-ribulose 5-phosphate-binding positions include 37-38 (RE), Asp42, 150-154 (RPGHT), and Glu174. Glu38 contributes to the Mg(2+) binding site. Mg(2+) is bound at residue His153.

The protein belongs to the DHBP synthase family. Homodimer. Mg(2+) serves as cofactor. Mn(2+) is required as a cofactor.

The enzyme catalyses D-ribulose 5-phosphate = (2S)-2-hydroxy-3-oxobutyl phosphate + formate + H(+). It functions in the pathway cofactor biosynthesis; riboflavin biosynthesis; 2-hydroxy-3-oxobutyl phosphate from D-ribulose 5-phosphate: step 1/1. Its function is as follows. Catalyzes the conversion of D-ribulose 5-phosphate to formate and 3,4-dihydroxy-2-butanone 4-phosphate. This Chloroherpeton thalassium (strain ATCC 35110 / GB-78) protein is 3,4-dihydroxy-2-butanone 4-phosphate synthase.